The sequence spans 198 residues: MGVSWVFEAEQTAKSVERILEGIGAELMGQFQVDVIPYNPATPSTDYATNIVMHHSKCPQSTFSICPKTDFRVSPKAVCDRGFDLILGKLAGGLVIDNAGKIEINGNEYNIHSDWTVRVGTATQGTTVKGVVVEVEYDPTVIIVQCREMMAEFIKQVFNKYHETQPEIFKITEKPERYSTLDTMWQYLQIAAKLRKKT.

Belongs to the Mediator complex subunit 20 family. As to quaternary structure, component of the Mediator complex.

Its subcellular location is the nucleus. Component of the Mediator complex, a coactivator involved in the regulated transcription of nearly all RNA polymerase II-dependent genes. Mediator functions as a bridge to convey information from gene-specific regulatory proteins to the basal RNA polymerase II transcription machinery. Mediator is recruited to promoters by direct interactions with regulatory proteins and serves as a scaffold for the assembly of a functional preinitiation complex with RNA polymerase II and the general transcription factors. This chain is Mediator of RNA polymerase II transcription subunit 20 (mdt-20), found in Caenorhabditis briggsae.